A 148-amino-acid chain; its full sequence is Large ribosomal subunit protein bL19 (148 aa).

It belongs to the bacterial ribosomal protein bL19 family.

Its function is as follows. This protein is located at the 30S-50S ribosomal subunit interface and may play a role in the structure and function of the aminoacyl-tRNA binding site. This is Large ribosomal subunit protein bL19 from Beijerinckia indica subsp. indica (strain ATCC 9039 / DSM 1715 / NCIMB 8712).